Reading from the N-terminus, the 198-residue chain is Peptidyl-tRNA hydrolase (198 aa).

Tyrosine 18 is a tRNA binding site. Histidine 23 (proton acceptor) is an active-site residue. Residues tyrosine 69, asparagine 71, and asparagine 117 each coordinate tRNA.

It belongs to the PTH family. As to quaternary structure, monomer.

It is found in the cytoplasm. It carries out the reaction an N-acyl-L-alpha-aminoacyl-tRNA + H2O = an N-acyl-L-amino acid + a tRNA + H(+). In terms of biological role, hydrolyzes ribosome-free peptidyl-tRNAs (with 1 or more amino acids incorporated), which drop off the ribosome during protein synthesis, or as a result of ribosome stalling. Its function is as follows. Catalyzes the release of premature peptidyl moieties from peptidyl-tRNA molecules trapped in stalled 50S ribosomal subunits, and thus maintains levels of free tRNAs and 50S ribosomes. The sequence is that of Peptidyl-tRNA hydrolase from Aeromonas hydrophila subsp. hydrophila (strain ATCC 7966 / DSM 30187 / BCRC 13018 / CCUG 14551 / JCM 1027 / KCTC 2358 / NCIMB 9240 / NCTC 8049).